The primary structure comprises 130 residues: Small ribosomal subunit protein uS8 (130 aa).

Belongs to the universal ribosomal protein uS8 family. Part of the 30S ribosomal subunit. Contacts proteins S5 and S12.

One of the primary rRNA binding proteins, it binds directly to 16S rRNA central domain where it helps coordinate assembly of the platform of the 30S subunit. The chain is Small ribosomal subunit protein uS8 from Shewanella denitrificans (strain OS217 / ATCC BAA-1090 / DSM 15013).